We begin with the raw amino-acid sequence, 285 residues long: Kanamycin B dioxygenase (285 aa).

This sequence belongs to the PhyH family. Requires Fe cation as cofactor.

It carries out the reaction kanamycin B + 2-oxoglutarate + O2 = 2'-dehydrokanamycin A + succinate + NH4(+) + CO2. It participates in antibiotic biosynthesis; kanamycin biosynthesis. Its function is as follows. Mediates the conversion of kanamycin B into 2'-dehydrokanamycin A during the transformation of kanamycin B to kanamycin A. The protein is Kanamycin B dioxygenase (kanJ) of Streptomyces kanamyceticus.